The chain runs to 394 residues: MNKQTIRDVAWSGKRALVRVDFNVPLDQARKVTDDTRIRAALPTINYLLEQGASVILMSHLGRPKKKVAEEFRLKPVADHLQSLLDAPVNYIQTTTGAEAEAAAQALQAGQVLLLENTRFDPREESNDPAMAEELAKLGDIYVNDAFGAAHRAHASTEGLAKFLPAVAGFLMEAELAALGKALDDPQRPFVTIIGGAKISDKIGVIENLLGKVDSLLIGGGMANTFLLAQNKAVGASLVEADSVAEAGRLIDEAQGRGVKLLLPSDVVVADAFSAEANTQVLSIDDVPDGWRILDIGPETRQTYSQVVSEAKTVIWNGPMGVFELEPFAAGTRAVAQALADSSAITIIGGGDSVAAIEQMGLAEKMSHISTGGGASLELLEGKVLPGIAALNDK.

Substrate is bound by residues 21–23 (DFN), Arg37, 60–63 (HLGR), Arg119, and Arg152. Residues Lys202, Glu324, and 350-353 (GGDS) each bind ATP.

This sequence belongs to the phosphoglycerate kinase family. As to quaternary structure, monomer.

The protein localises to the cytoplasm. It catalyses the reaction (2R)-3-phosphoglycerate + ATP = (2R)-3-phospho-glyceroyl phosphate + ADP. Its pathway is carbohydrate degradation; glycolysis; pyruvate from D-glyceraldehyde 3-phosphate: step 2/5. The sequence is that of Phosphoglycerate kinase from Herpetosiphon aurantiacus (strain ATCC 23779 / DSM 785 / 114-95).